The sequence spans 336 residues: F420-dependent glucose-6-phosphate dehydrogenase (336 aa).

D39 provides a ligand contact to coenzyme F420-(gamma-Glu)n. H40 acts as the Proton donor in catalysis. Coenzyme F420-(gamma-Glu)n-binding positions include T76 and 107-108 (TG). Residue E109 is the Proton acceptor of the active site. Residues N112, 177-178 (GG), and 180-181 (EV) each bind coenzyme F420-(gamma-Glu)n. Residues T195, K198, K259, and R283 each coordinate substrate.

This sequence belongs to the F420-dependent glucose-6-phosphate dehydrogenase family. As to quaternary structure, homodimer.

It catalyses the reaction oxidized coenzyme F420-(gamma-L-Glu)(n) + D-glucose 6-phosphate + H(+) = 6-phospho-D-glucono-1,5-lactone + reduced coenzyme F420-(gamma-L-Glu)(n). In terms of biological role, catalyzes the coenzyme F420-dependent oxidation of glucose 6-phosphate (G6P) to 6-phosphogluconolactone. Appears to have a role in resistance to oxidative stress, via its consumption of G6P that serves as a source of reducing power to combat oxidative stress in mycobacteria. In Mycobacterium leprae (strain Br4923), this protein is F420-dependent glucose-6-phosphate dehydrogenase.